We begin with the raw amino-acid sequence, 99 residues long: Integration host factor subunit alpha (99 aa).

The tract at residues 52–73 (FGNFTLRDKPQRPGRNPKTGEE) is disordered.

This sequence belongs to the bacterial histone-like protein family. Heterodimer of an alpha and a beta chain.

Functionally, this protein is one of the two subunits of integration host factor, a specific DNA-binding protein that functions in genetic recombination as well as in transcriptional and translational control. This is Integration host factor subunit alpha from Legionella pneumophila subsp. pneumophila (strain Philadelphia 1 / ATCC 33152 / DSM 7513).